A 78-amino-acid chain; its full sequence is Large ribosomal subunit protein bL28 (78 aa).

Residues 1–20 (MSRVCQVTGKGPVTGNNISH) form a disordered region.

The protein belongs to the bacterial ribosomal protein bL28 family.

This is Large ribosomal subunit protein bL28 from Pseudomonas fluorescens (strain ATCC BAA-477 / NRRL B-23932 / Pf-5).